A 271-amino-acid polypeptide reads, in one-letter code: Urease accessory protein UreD (271 aa).

Belongs to the UreD family. As to quaternary structure, ureD, UreF and UreG form a complex that acts as a GTP-hydrolysis-dependent molecular chaperone, activating the urease apoprotein by helping to assemble the nickel containing metallocenter of UreC. The UreE protein probably delivers the nickel.

It is found in the cytoplasm. Its function is as follows. Required for maturation of urease via the functional incorporation of the urease nickel metallocenter. The polypeptide is Urease accessory protein UreD (Mycolicibacterium smegmatis (strain ATCC 700084 / mc(2)155) (Mycobacterium smegmatis)).